Here is a 191-residue protein sequence, read N- to C-terminus: Ribonuclease HII (191 aa).

In terms of domain architecture, RNase H type-2 spans 7-191 (ILMAGVDEVG…YSPVADLISK (185 aa)). A divalent metal cation contacts are provided by Asp13, Glu14, and Asp103.

Belongs to the RNase HII family. Mn(2+) is required as a cofactor. It depends on Mg(2+) as a cofactor.

It is found in the cytoplasm. The catalysed reaction is Endonucleolytic cleavage to 5'-phosphomonoester.. In terms of biological role, endonuclease that specifically degrades the RNA of RNA-DNA hybrids. The sequence is that of Ribonuclease HII from Legionella pneumophila subsp. pneumophila (strain Philadelphia 1 / ATCC 33152 / DSM 7513).